Here is a 376-residue protein sequence, read N- to C-terminus: Tetraacyldisaccharide 4'-kinase (376 aa).

Residue 51–58 participates in ATP binding; sequence AVGGTGKT.

It belongs to the LpxK family.

The catalysed reaction is a lipid A disaccharide + ATP = a lipid IVA + ADP + H(+). It participates in glycolipid biosynthesis; lipid IV(A) biosynthesis; lipid IV(A) from (3R)-3-hydroxytetradecanoyl-[acyl-carrier-protein] and UDP-N-acetyl-alpha-D-glucosamine: step 6/6. Its function is as follows. Transfers the gamma-phosphate of ATP to the 4'-position of a tetraacyldisaccharide 1-phosphate intermediate (termed DS-1-P) to form tetraacyldisaccharide 1,4'-bis-phosphate (lipid IVA). The sequence is that of Tetraacyldisaccharide 4'-kinase from Bacteroides fragilis (strain ATCC 25285 / DSM 2151 / CCUG 4856 / JCM 11019 / LMG 10263 / NCTC 9343 / Onslow / VPI 2553 / EN-2).